Consider the following 380-residue polypeptide: Outer mitochondrial transmembrane helix translocase (380 aa).

Topologically, residues M1–E18 are mitochondrial intermembrane. The helical transmembrane segment at V19–I37 threads the bilayer. At K38–D380 the chain is on the cytoplasmic side. G136–T143 serves as a coordination point for ATP.

This sequence belongs to the AAA ATPase family. MSP1 subfamily.

Its subcellular location is the mitochondrion outer membrane. The protein resides in the peroxisome membrane. It is found in the postsynaptic cell membrane. It carries out the reaction [protein]-with a C-terminal TM segment(out) + ATP + H2O = [protein]-with a C-terminal TM segment(in) + ADP + phosphate + H(+). In terms of biological role, outer mitochondrial translocase required to remove mislocalized tail-anchored transmembrane proteins on mitochondria. Specifically recognizes and binds tail-anchored transmembrane proteins: acts as a dislocase that mediates the ATP-dependent extraction of mistargeted tail-anchored transmembrane proteins from the mitochondrion outer membrane. Also plays a critical role in regulating the surface expression of AMPA receptors (AMPAR), thereby regulating synaptic plasticity and learning and memory. This chain is Outer mitochondrial transmembrane helix translocase, found in Danio rerio (Zebrafish).